Here is a 208-residue protein sequence, read N- to C-terminus: Uracil phosphoribosyltransferase (208 aa).

5-phospho-alpha-D-ribose 1-diphosphate contacts are provided by residues Arg-78, Arg-103, and 130 to 138; that span reads DPMLATGGT. Residues Ile-193 and 198–200 each bind uracil; that span reads GDA. Asp-199 contacts 5-phospho-alpha-D-ribose 1-diphosphate.

This sequence belongs to the UPRTase family. It depends on Mg(2+) as a cofactor.

It catalyses the reaction UMP + diphosphate = 5-phospho-alpha-D-ribose 1-diphosphate + uracil. It participates in pyrimidine metabolism; UMP biosynthesis via salvage pathway; UMP from uracil: step 1/1. With respect to regulation, allosterically activated by GTP. Functionally, catalyzes the conversion of uracil and 5-phospho-alpha-D-ribose 1-diphosphate (PRPP) to UMP and diphosphate. The protein is Uracil phosphoribosyltransferase of Nitratidesulfovibrio vulgaris (strain DSM 19637 / Miyazaki F) (Desulfovibrio vulgaris).